Reading from the N-terminus, the 141-residue chain is ATP synthase epsilon chain (141 aa).

This sequence belongs to the ATPase epsilon chain family. In terms of assembly, F-type ATPases have 2 components, CF(1) - the catalytic core - and CF(0) - the membrane proton channel. CF(1) has five subunits: alpha(3), beta(3), gamma(1), delta(1), epsilon(1). CF(0) has three main subunits: a, b and c.

The protein localises to the cell inner membrane. In terms of biological role, produces ATP from ADP in the presence of a proton gradient across the membrane. The polypeptide is ATP synthase epsilon chain (Pseudomonas fluorescens (strain Pf0-1)).